The chain runs to 83 residues: UPF0297 protein LCK_00468 (83 aa).

The protein belongs to the UPF0297 family.

The polypeptide is UPF0297 protein LCK_00468 (Leuconostoc citreum (strain KM20)).